Reading from the N-terminus, the 65-residue chain is Large ribosomal subunit protein bL33c (65 aa).

The protein belongs to the bacterial ribosomal protein bL33 family.

Its subcellular location is the plastid. The protein localises to the chloroplast. This is Large ribosomal subunit protein bL33c from Zygnema circumcarinatum (Green alga).